We begin with the raw amino-acid sequence, 320 residues long: Cytochrome f (320 aa).

The N-terminal stretch at 1-35 (MQTRNAFSWLKKQITRSISVSLMIYILTRTSISSA) is a signal peptide. Heme is bound by residues Tyr-36, Cys-56, Cys-59, and His-60. Residues 286 to 305 (VQGLLFFLASVILAQIFLVL) form a helical membrane-spanning segment.

The protein belongs to the cytochrome f family. The 4 large subunits of the cytochrome b6-f complex are cytochrome b6, subunit IV (17 kDa polypeptide, petD), cytochrome f and the Rieske protein, while the 4 small subunits are PetG, PetL, PetM and PetN. The complex functions as a dimer. Heme is required as a cofactor.

The protein localises to the plastid. Its subcellular location is the chloroplast thylakoid membrane. In terms of biological role, component of the cytochrome b6-f complex, which mediates electron transfer between photosystem II (PSII) and photosystem I (PSI), cyclic electron flow around PSI, and state transitions. This Atropa belladonna (Belladonna) protein is Cytochrome f.